The chain runs to 490 residues: Betaine aldehyde dehydrogenase (490 aa).

Positions 26, 27, and 93 each coordinate K(+). 150–152 (GAW) contributes to the NAD(+) binding site. Lysine 162 acts as the Charge relay system in catalysis. 176–179 (KPSE) contributes to the NAD(+) binding site. Valine 180 is a K(+) binding site. 230–233 (GVAS) lines the NAD(+) pocket. Residue leucine 246 coordinates K(+). The active-site Proton acceptor is glutamate 252. NAD(+) is bound by residues glycine 254, cysteine 286, and glutamate 387. Cysteine 286 acts as the Nucleophile in catalysis. Cysteine 286 is subject to Cysteine sulfenic acid (-SOH). K(+) is bound by residues lysine 457 and glycine 460. The Charge relay system role is filled by glutamate 464.

The protein belongs to the aldehyde dehydrogenase family. As to quaternary structure, dimer of dimers. Requires K(+) as cofactor.

The enzyme catalyses betaine aldehyde + NAD(+) + H2O = glycine betaine + NADH + 2 H(+). It participates in amine and polyamine biosynthesis; betaine biosynthesis via choline pathway; betaine from betaine aldehyde: step 1/1. Functionally, involved in the biosynthesis of the osmoprotectant glycine betaine. Catalyzes the irreversible oxidation of betaine aldehyde to the corresponding acid. The protein is Betaine aldehyde dehydrogenase of Escherichia coli (strain ATCC 8739 / DSM 1576 / NBRC 3972 / NCIMB 8545 / WDCM 00012 / Crooks).